Here is a 764-residue protein sequence, read N- to C-terminus: Subtilisin-like protease SBT1.6 (764 aa).

The signal sequence occupies residues 1–20; sequence MASSTIVLLLFLSFPFISFA. The 54-residue stretch at 46-99 folds into the Inhibitor I9 domain; sequence HWYSTEFAEESRIVHVYHTVFHGFSAVVTPDEADNLRNHPAVLAVFEDRRRELH. The 504-residue stretch at 103–606 folds into the Peptidase S8 domain; the sequence is SPQFLGLQNQ…SGHLNLGRAM (504 aa). The active-site Charge relay system is the D131. N-linked (GlcNAc...) asparagine glycosylation is present at N191. Catalysis depends on H205, which acts as the Charge relay system. The 81-residue stretch at 377–457 folds into the PA domain; sequence SSASLCMENT…NEGDRIKAYA (81 aa). The active-site Charge relay system is the S538. An N-linked (GlcNAc...) asparagine glycan is attached at N578.

The protein belongs to the peptidase S8 family. In terms of tissue distribution, expressed in roots, leaves and flowers of mature plants.

The sequence is that of Subtilisin-like protease SBT1.6 from Arabidopsis thaliana (Mouse-ear cress).